A 467-amino-acid polypeptide reads, in one-letter code: Zinc finger and BTB domain-containing protein 43 (467 aa).

Position 1 is an N-acetylmethionine (Met-1). Positions 33–97 constitute a BTB domain; sequence CDVSIVVQGH…SYTGRLVMPA (65 aa). Disordered stretches follow at residues 134 to 153 and 162 to 225; these read LNHG…GLVE and HTDF…SAEF. Composition is skewed to basic and acidic residues over residues 164–174 and 182–194; these read DFPKAQELRDG and KDEL…EHEY. Glycyl lysine isopeptide (Lys-Gly) (interchain with G-Cter in SUMO2) cross-links involve residues Lys-182, Lys-241, Lys-247, Lys-297, and Lys-358. The C2H2-type 1; atypical zinc-finger motif lies at 373–394; that stretch reads YPCQCGKSFTHKSQRDRHMSMH. The C2H2-type 2 zinc finger occupies 400–422; sequence YGCGVCGKKFKMKHHLVGHMKIH. The residue at position 423 (Thr-423) is a Phosphothreonine. A C2H2-type 3; atypical zinc finger spans residues 428 to 450; sequence YECNICAKRFMWRDSFHRHVTSC. Lys-458 participates in a covalent cross-link: Glycyl lysine isopeptide (Lys-Gly) (interchain with G-Cter in SUMO2).

The protein belongs to the krueppel C2H2-type zinc-finger protein family. Interacts with BDP1.

Its subcellular location is the nucleus. Its function is as follows. May be involved in transcriptional regulation. The protein is Zinc finger and BTB domain-containing protein 43 (ZBTB43) of Homo sapiens (Human).